Consider the following 627-residue polypeptide: Dual specificity testis-specific protein kinase 1 (627 aa).

Residues 1 to 36 (MAGERPPLRGPGPGEAPGEGPGGAGGGPGRGRPSSY) form a disordered region. Over residues 11–30 (PGPGEAPGEGPGGAGGGPGR) the composition is skewed to gly residues. One can recognise a Protein kinase domain in the interval 52 to 309 (FDCAEKIGAG…TEITQHLEQI (258 aa)). Residues 58 to 66 (IGAGFFSEV) and lysine 81 contribute to the ATP site. Aspartate 170 acts as the Proton acceptor in catalysis. Residue serine 215 is modified to Phosphoserine; by autocatalysis. Residues 316-330 (ATPLAKPPLTKAPLT) are compositionally biased toward low complexity. Disordered regions lie at residues 316-373 (ATPL…SWGD), 436-485 (RCRS…GLAP), 500-519 (CSSASQPWSPRSGPPLNNNP), and 532-565 (REPWNRAQHSLPRAAALERTEPSPPPSAPREPEE). The residue at position 338 (arginine 338) is an Omega-N-methylarginine. Over residues 348 to 357 (PDPRLSRSRS) the composition is skewed to basic and acidic residues. Residues 421–525 (VTTPDILVQP…NNNPPAVVVN (105 aa)) are required for interaction with YWHAB. Positions 528 to 625 (QGWAREPWNR…PTPSLQLPGA (98 aa)) are required for interaction with PARVA. A required for interaction with SPRED1 and SPRY2. Required for TESK1-mediated dephosphorylation of SPRY2 and SPRY2 inhibition of ERK phosphorylation region spans residues 528 to 627 (QGWAREPWNR…PSLQLPGARS (100 aa)).

It belongs to the protein kinase superfamily. TKL Ser/Thr protein kinase family. In terms of assembly, interacts (via both C- and N-termini) with SPRY4 (via C-terminus); the interaction inhibits TESK1 kinase activity. Interacts with TAOK1; the interaction inhibits TAOK1 kinase activity. Interacts (via C-terminus) with SPRED1 (via C-terminus); the interaction inhibits TESK1 kinase activity. Interacts (via C-terminus) with PARVA/PARVIN (via C-terminus); the interaction inhibits TESK1 kinase activity. Interacts with YWHAB/14-3-3 beta; the interaction is dependent on the phosphorylation of TESK1 Ser-439 and inhibits TESK1 kinase activity. Interacts with SPRY1, SPRY3 and SPRED2. Interacts (via C-terminus) with SPRY2 (via C-terminus); the interaction disrupts SPRY2 interaction with PPP2CA/PP2A-C, possibly by vesicular sequestration of SPRY2. Therefore dephosphorylation of SPRY2 by the serine/threonine-protein phosphatase 2A (PP2A) holoenzyme is lost, inhibiting its interaction with GRB2. Mg(2+) is required as a cofactor. Requires Mn(2+) as cofactor. Post-translationally, autophosphorylated on serine and tyrosine residues. Expressed in testes and brain (at protein level).

Its subcellular location is the cytoplasm. It is found in the perinuclear region. The protein localises to the cytoskeleton. It localises to the microtubule organizing center. The protein resides in the centrosome. Its subcellular location is the cell projection. It is found in the lamellipodium. It carries out the reaction L-seryl-[protein] + ATP = O-phospho-L-seryl-[protein] + ADP + H(+). It catalyses the reaction L-threonyl-[protein] + ATP = O-phospho-L-threonyl-[protein] + ADP + H(+). The catalysed reaction is L-tyrosyl-[protein] + ATP = O-phospho-L-tyrosyl-[protein] + ADP + H(+). Its activity is regulated as follows. Activated by autophosphorylation on Ser-215. Kinase activity is inhibited by SPRED1. Its function is as follows. Dual specificity protein kinase activity catalyzing autophosphorylation and phosphorylation of exogenous substrates on both serine/threonine and tyrosine residues. Regulates the cellular cytoskeleton by enhancing actin stress fiber formation via phosphorylation of cofilin and by preventing microtubule breakdown via inhibition of TAOK1/MARKK kinase activity. Inhibits podocyte motility via regulation of actin cytoskeletal dynamics and phosphorylation of CFL1. Positively regulates integrin-mediated cell spreading, via phosphorylation of cofilin. Suppresses ciliogenesis via multiple pathways; phosphorylation of CFL1, suppression of ciliary vesicle directional trafficking to the ciliary base, and by facilitating YAP1 nuclear localization where it acts as a transcriptional corepressor of the TEAD4 target genes AURKA and PLK1. Probably plays a central role at and after the meiotic phase of spermatogenesis. The chain is Dual specificity testis-specific protein kinase 1 (Tesk1) from Mus musculus (Mouse).